The sequence spans 585 residues: Rab GTPase-binding effector protein 2 (585 aa).

At Ala2 the chain carries N-acetylalanine. Residues 27–183 (QEGAKVEAES…ELIQEIQRRP (157 aa)) adopt a coiled-coil conformation. Disordered regions lie at residues 178 to 265 (EIQR…ASLV), 381 to 408 (ENQG…EESL), and 491 to 515 (EEQS…EEAQ). 4 positions are modified to phosphoserine: Ser188, Ser192, Ser198, and Ser202. A coiled-coil region spans residues 288-540 (NQWEQLQLEG…QAELETSEQV (253 aa)). The segment covering 491–501 (EEQSKAKRQEV) has biased composition (basic and acidic residues).

This sequence belongs to the rabaptin family. In terms of assembly, heterodimer with RABGEF1. The dimer binds RAB5A that has been activated by GTP-binding. Interacts with SDCCAG8; this interaction is important for ciliogenesis regulation. Interacts with RAB4; this interaction may mediate VEGFR2 cell surface expression.

Its subcellular location is the cytoplasm. The protein resides in the early endosome. It localises to the cytoskeleton. It is found in the microtubule organizing center. The protein localises to the centrosome. Its subcellular location is the cilium basal body. Its function is as follows. Plays a role in membrane trafficking and in homotypic early endosome fusion. Participates in arteriogenesis by regulating vascular endothelial growth factor receptor 2/VEGFR2 cell surface expression and endosomal trafficking. By interacting with SDCCAG8, localizes to centrosomes and plays a critical role in ciliogenesis. This Bos taurus (Bovine) protein is Rab GTPase-binding effector protein 2 (RABEP2).